The primary structure comprises 181 residues: Regulator of G-protein signaling 10 (181 aa).

The disordered stretch occupies residues 1 to 32 (MFNRAVSRLSRKRPPSDIHDSDGSSSSSHQSL). Over residues 23–32 (GSSSSSHQSL) the composition is skewed to low complexity. Serine 24 and serine 41 each carry phosphoserine. The 116-residue stretch at 41 to 156 (SLENLLEDPE…LKSDLFLKHK (116 aa)) folds into the RGS domain. Cysteine 74 carries S-palmitoyl cysteine lipidation. Residues 158 to 181 (TEEEEEDLPDAQTAAKRASRIYNT) form a disordered region. Position 176 is a phosphoserine (serine 176).

As to quaternary structure, interacts with GNAZ, GNAI1 and GNAI3. Associates specifically with the activated, GTP-bound forms of GNAZ and GNAI3.

Its subcellular location is the cytoplasm. The protein resides in the cytosol. It localises to the nucleus. Its function is as follows. Regulates G protein-coupled receptor signaling cascades, including signaling downstream of the muscarinic acetylcholine receptor CHRM2. Inhibits signal transduction by increasing the GTPase activity of G protein alpha subunits, thereby driving them into their inactive GDP-bound form. Modulates the activity of potassium channels that are activated in response to CHRM2 signaling. Activity on GNAZ is inhibited by palmitoylation of the G-protein. The protein is Regulator of G-protein signaling 10 (RGS10) of Homo sapiens (Human).